We begin with the raw amino-acid sequence, 572 residues long: Sulfite reductase [NADPH] hemoprotein beta-component (572 aa).

[4Fe-4S] cluster is bound by residues Cys-437, Cys-443, Cys-482, and Cys-486. A siroheme-binding site is contributed by Cys-486.

Belongs to the nitrite and sulfite reductase 4Fe-4S domain family. Alpha(8)-beta(8). The alpha component is a flavoprotein, the beta component is a hemoprotein. Siroheme is required as a cofactor. The cofactor is [4Fe-4S] cluster.

The catalysed reaction is hydrogen sulfide + 3 NADP(+) + 3 H2O = sulfite + 3 NADPH + 4 H(+). It functions in the pathway sulfur metabolism; hydrogen sulfide biosynthesis; hydrogen sulfide from sulfite (NADPH route): step 1/1. Its function is as follows. Component of the sulfite reductase complex that catalyzes the 6-electron reduction of sulfite to sulfide. This is one of several activities required for the biosynthesis of L-cysteine from sulfate. This is Sulfite reductase [NADPH] hemoprotein beta-component from Staphylococcus epidermidis (strain ATCC 12228 / FDA PCI 1200).